A 355-amino-acid polypeptide reads, in one-letter code: uncharacterized protein (355 aa).

The protein belongs to the ycf89 family.

Its subcellular location is the plastid. It localises to the chloroplast. This is an uncharacterized protein from Trieres chinensis (Marine centric diatom).